Consider the following 373-residue polypeptide: Erythronate-4-phosphate dehydrogenase (373 aa).

Substrate contacts are provided by Ser45 and Thr67. NAD(+)-binding positions include Asp147, 206-208 (ASR), and Asp232. Arg208 is an active-site residue. Glu237 is an active-site residue. The active-site Proton donor is His254. Residue Gly257 coordinates NAD(+). Tyr258 contacts substrate.

It belongs to the D-isomer specific 2-hydroxyacid dehydrogenase family. PdxB subfamily. In terms of assembly, homodimer.

It is found in the cytoplasm. It carries out the reaction 4-phospho-D-erythronate + NAD(+) = (R)-3-hydroxy-2-oxo-4-phosphooxybutanoate + NADH + H(+). Its pathway is cofactor biosynthesis; pyridoxine 5'-phosphate biosynthesis; pyridoxine 5'-phosphate from D-erythrose 4-phosphate: step 2/5. Its function is as follows. Catalyzes the oxidation of erythronate-4-phosphate to 3-hydroxy-2-oxo-4-phosphonooxybutanoate. In Tolumonas auensis (strain DSM 9187 / NBRC 110442 / TA 4), this protein is Erythronate-4-phosphate dehydrogenase.